We begin with the raw amino-acid sequence, 132 residues long: Bleomycin resistance protein (132 aa).

Residues M1 to Q129 form the VOC domain.

It belongs to the bleomycin resistance protein family.

Functionally, binding protein with a strong affinity to the bleomycin family of antibiotics. This Geobacillus stearothermophilus (Bacillus stearothermophilus) protein is Bleomycin resistance protein (bleO).